The chain runs to 290 residues: Ribonuclease HIII (290 aa).

The RNase H type-2 domain occupies 78–290; it reads LPLIGTDEVG…FKNTEKAKNA (213 aa). A divalent metal cation contacts are provided by Asp84, Glu85, and Asp187.

Belongs to the RNase HII family. RnhC subfamily. Requires Mn(2+) as cofactor. The cofactor is Mg(2+).

Its subcellular location is the cytoplasm. The catalysed reaction is Endonucleolytic cleavage to 5'-phosphomonoester.. Its function is as follows. Endonuclease that specifically degrades the RNA of RNA-DNA hybrids. The chain is Ribonuclease HIII from Streptococcus pneumoniae serotype 2 (strain D39 / NCTC 7466).